The following is a 440-amino-acid chain: Long-chain alkane monooxygenase (440 aa).

Residues Asp58, 137 to 138 (SH), Tyr158, and 227 to 230 (AGMS) contribute to the FMN site.

Belongs to the NtaA/SnaA/DszA monooxygenase family. As to quaternary structure, homodimer.

Its subcellular location is the secreted. It carries out the reaction a long-chain alkane + FMNH2 + O2 = a long chain fatty alcohol + FMN + H2O + H(+). Its function is as follows. Involved in the degradation of long-chain alkanes. Converts alkanes ranging from C(15) to C(36) into their corresponding primary alcohols. The chain is Long-chain alkane monooxygenase from Geobacillus thermodenitrificans (strain NG80-2).